The following is a 637-amino-acid chain: Pyrethroid hydrolase (637 aa).

The catalysed reaction is (-)-trans-permethrin + H2O = (3-phenoxyphenyl)methanol + (1S,3R)-3-(2,2-dichlorovinyl)-2,2-dimethylcyclopropanecarboxylate + H(+). Inhibited by Hg(2+), Ag(+) and rho-chloromercuribenzoate. Functionally, catalyzes the hydrolysis of pyrethroids pesticides. Hydrolyzes cis-permethrin at approximately equal rate to trans-permethrin. This is Pyrethroid hydrolase (estP) from Klebsiella sp.